The chain runs to 160 residues: MEKDDLTHFNDEKRAKMVDVTSKSETKRRAIARATIHMNEETLARILAGKIAKGDVLAVAQVAGIMAAKKTSELIPMCHPIMTTKADISFEDDGKTELTITSEVVTVGKTGVEMEALTAVTIAALTIYDMCKAMDKGMRIEKTYLVEKTGGKSGTFKAEA.

Residues 77–79 and 114–115 contribute to the substrate site; these read MCH and ME. Residue D129 is part of the active site.

It belongs to the MoaC family. In terms of assembly, homohexamer; trimer of dimers.

The catalysed reaction is (8S)-3',8-cyclo-7,8-dihydroguanosine 5'-triphosphate = cyclic pyranopterin phosphate + diphosphate. Its pathway is cofactor biosynthesis; molybdopterin biosynthesis. Its function is as follows. Catalyzes the conversion of (8S)-3',8-cyclo-7,8-dihydroguanosine 5'-triphosphate to cyclic pyranopterin monophosphate (cPMP). In Listeria monocytogenes serotype 4a (strain HCC23), this protein is Cyclic pyranopterin monophosphate synthase.